Reading from the N-terminus, the 368-residue chain is Cobalt-precorrin-5B C(1)-methyltransferase (368 aa).

Belongs to the CbiD family.

The enzyme catalyses Co-precorrin-5B + S-adenosyl-L-methionine = Co-precorrin-6A + S-adenosyl-L-homocysteine. It functions in the pathway cofactor biosynthesis; adenosylcobalamin biosynthesis; cob(II)yrinate a,c-diamide from sirohydrochlorin (anaerobic route): step 6/10. In terms of biological role, catalyzes the methylation of C-1 in cobalt-precorrin-5B to form cobalt-precorrin-6A. The chain is Cobalt-precorrin-5B C(1)-methyltransferase from Brucella anthropi (strain ATCC 49188 / DSM 6882 / CCUG 24695 / JCM 21032 / LMG 3331 / NBRC 15819 / NCTC 12168 / Alc 37) (Ochrobactrum anthropi).